A 551-amino-acid polypeptide reads, in one-letter code: Probable glucomannan 4-beta-mannosyltransferase 3 (551 aa).

Residues 60–80 traverse the membrane as a helical segment; it reads ACLALSAMLLADAVLMAAACF. Asp-154 is a catalytic residue. Asp-213 and Asp-215 together coordinate substrate. Asp-307 is an active-site residue. The next 4 helical transmembrane spans lie at 386-406, 409-429, 504-524, and 525-545; these read VVAHVVPFMLYCVVIPFSVLI, VTVPVWGVVYVPTTITLLHAI, ILFSIFLFFCATYNLAYGGDY, and YFVYIYLQAIAFLVVGIGFCG.

It belongs to the glycosyltransferase 2 family. Plant cellulose synthase-like A subfamily.

It is found in the golgi apparatus membrane. It catalyses the reaction GDP-mannose + (glucomannan)n = GDP + (glucomannan)n+1.. Probable mannan synthase which consists of a 4-beta-mannosyltransferase activity on mannan using GDP-mannose. The beta-1,4-mannan product is the backbone for galactomannan synthesis by galactomannan galactosyltransferase. Galactomannan is a noncellulosic polysaccharides of plant cell wall. The sequence is that of Probable glucomannan 4-beta-mannosyltransferase 3 from Oryza sativa subsp. japonica (Rice).